Here is a 432-residue protein sequence, read N- to C-terminus: Amino-acid acetyltransferase (432 aa).

In terms of domain architecture, N-acetyltransferase spans 286-425; it reads ERVREAAIED…ASLYNYQRNS (140 aa).

It belongs to the acetyltransferase family. ArgA subfamily.

It localises to the cytoplasm. The enzyme catalyses L-glutamate + acetyl-CoA = N-acetyl-L-glutamate + CoA + H(+). The protein operates within amino-acid biosynthesis; L-arginine biosynthesis; N(2)-acetyl-L-ornithine from L-glutamate: step 1/4. This Pseudomonas fluorescens (strain ATCC BAA-477 / NRRL B-23932 / Pf-5) protein is Amino-acid acetyltransferase.